A 323-amino-acid chain; its full sequence is Putative CDC123-like protein L884 (323 aa).

The protein belongs to the CDC123 family.

The polypeptide is Putative CDC123-like protein L884 (Acanthamoeba polyphaga mimivirus (APMV)).